Here is a 152-residue protein sequence, read N- to C-terminus: Endoribonuclease YbeY (152 aa).

Zn(2+) contacts are provided by His114, His118, and His124.

Belongs to the endoribonuclease YbeY family. Requires Zn(2+) as cofactor.

The protein resides in the cytoplasm. Single strand-specific metallo-endoribonuclease involved in late-stage 70S ribosome quality control and in maturation of the 3' terminus of the 16S rRNA. The chain is Endoribonuclease YbeY from Wigglesworthia glossinidia brevipalpis.